Here is a 232-residue protein sequence, read N- to C-terminus: Phosphatidylserine decarboxylase proenzyme (232 aa).

S201 acts as the Schiff-base intermediate with substrate; via pyruvic acid in catalysis. S201 is modified (pyruvic acid (Ser); by autocatalysis).

This sequence belongs to the phosphatidylserine decarboxylase family. PSD-A subfamily. Heterodimer of a large membrane-associated beta subunit and a small pyruvoyl-containing alpha subunit. Requires pyruvate as cofactor. Is synthesized initially as an inactive proenzyme. Formation of the active enzyme involves a self-maturation process in which the active site pyruvoyl group is generated from an internal serine residue via an autocatalytic post-translational modification. Two non-identical subunits are generated from the proenzyme in this reaction, and the pyruvate is formed at the N-terminus of the alpha chain, which is derived from the carboxyl end of the proenzyme. The post-translation cleavage follows an unusual pathway, termed non-hydrolytic serinolysis, in which the side chain hydroxyl group of the serine supplies its oxygen atom to form the C-terminus of the beta chain, while the remainder of the serine residue undergoes an oxidative deamination to produce ammonia and the pyruvoyl prosthetic group on the alpha chain.

It localises to the cell membrane. The enzyme catalyses a 1,2-diacyl-sn-glycero-3-phospho-L-serine + H(+) = a 1,2-diacyl-sn-glycero-3-phosphoethanolamine + CO2. Its pathway is phospholipid metabolism; phosphatidylethanolamine biosynthesis; phosphatidylethanolamine from CDP-diacylglycerol: step 2/2. Catalyzes the formation of phosphatidylethanolamine (PtdEtn) from phosphatidylserine (PtdSer). The polypeptide is Phosphatidylserine decarboxylase proenzyme (Mycolicibacterium smegmatis (strain ATCC 700084 / mc(2)155) (Mycobacterium smegmatis)).